The chain runs to 323 residues: Estradiol 17 beta-dehydrogenase 5 (323 aa).

NADP(+)-binding positions include 20 to 24 and Asp-50; that span reads GFGTY. The active-site Proton donor is the Tyr-55. His-117 contributes to the substrate binding site. NADP(+) is bound by residues 166 to 167, Gln-190, 216 to 221, and 270 to 280; these read SN, YSALGS, and KSFSEKRIKEN.

Belongs to the aldo/keto reductase family. Monomer. Post-translationally, three forms are detected, probably due to post-translational modifications. In terms of tissue distribution, mainly found in liver. Also expressed weakly in kidney.

In terms of biological role, active toward androgens, estrogens, and xenobiotic substrates. Also exhibits low 20 alpha-HSD activity. Shows a-stereospecificity in hydrogen transfer between cofactors and substrates (A-specific). Preferentially catalyzes the reduction of 4-androstenedione, 5-alpha-androstane-3,17-dione, androsterone and dehydroepiandrosterone to testosterone, dihydrotestosterone, 5-alpha-androstane-3-alpha,17-beta-diol and 5-androstene-3-beta,17-beta-diol, respectively. This Mus musculus (Mouse) protein is Estradiol 17 beta-dehydrogenase 5 (Akr1c6).